Consider the following 204-residue polypeptide: MATKVYIVYYSMYGHVEKLAEEIRKGAASVEGVEAKLWQVPETLHEEALSKMSAPPKSESPIITPNELAEADGFVFGFPTRFGMMAAQFKAFLDATGGLWRAQALAGKPAGIFYSTGSQGGGQETTALTAITQLVHHGMLFVPIGYTFGAGMFEMENVKGGSPYGAGTFAGDGSRQPTELELQQAFHQGQYIASITKKLKGSTA.

In terms of domain architecture, Flavodoxin-like spans 5 to 192 (VYIVYYSMYG…QQAFHQGQYI (188 aa)). Residues 11–15 (SMYGH), 112–165 (IFYS…SPYG), and His-136 each bind FMN. Tyr-13 is a binding site for NAD(+).

This sequence belongs to the WrbA family. FMN is required as a cofactor.

The protein resides in the cell membrane. It carries out the reaction a quinone + NADH + H(+) = a quinol + NAD(+). The enzyme catalyses a quinone + NADPH + H(+) = a quinol + NADP(+). In terms of biological role, catalyzes the transfer of electrons from NADH and NADPH to several quinones in vitro. May act as detoxification enzyme, and protect against auxin-induced oxidative stress. The sequence is that of NAD(P)H dehydrogenase (quinone) FQR1 from Arabidopsis thaliana (Mouse-ear cress).